Here is a 456-residue protein sequence, read N- to C-terminus: MQLSSSLRSARSAAASSGCALASRPVVACRRVTPSVTRPGPFTIATGPLLPASRSKAGGGIRVFSSALYEFGQQLKEDLEHDLSRARVDAITNKTRIAELEQQRRILMAVGGMADDEPELKAALMQLEEILGVSFNELQLMLAETLADHPAKMDNLAAMAAVVGTGSDGGGDESGDRRTADAADADGDGDGGERAWLRFKADVRACLADLRNRKGGITLHRAIVKDMVSASSNPGARRSSSSVDKMAREELDRLMPFLLDDFLDNMPGLKAAFTGKAEPGAEGDDGEDEEEGEAQGVGEDAVDSSSGGSGGGGVLSCTAWQQVLGRTVPASSPTLALVLARGYLAMAPRQYRALALVRMILPGKTGGGVDGALTRKEGLSLLKKLRPGISGLADKDKQWLEWVIARLAAEFAVQPAGDGHEPEPKRPELPPTAVQREPPAEEQHKPTAGARDSPNM.

Positions 1 to 28 (MQLSSSLRSARSAAASSGCALASRPVVA) are cleaved as a signal peptide. Disordered stretches follow at residues 167 to 189 (SDGG…DGDG), 273 to 310 (FTGK…GGSG), and 414 to 456 (QPAG…SPNM). Residues 281–293 (AEGDDGEDEEEGE) show a composition bias toward acidic residues. Residues 418-428 (DGHEPEPKRPE) are compositionally biased toward basic and acidic residues.

This chain is Ezy-1 protein (Ezy-1), found in Chlamydomonas reinhardtii (Chlamydomonas smithii).